A 432-amino-acid chain; its full sequence is Serine--tRNA ligase (432 aa).

237–239 (TSE) is an L-serine binding site. 268-270 (RSE) lines the ATP pocket. Glu291 is an L-serine binding site. Residue 355 to 358 (EISS) participates in ATP binding. Ser390 serves as a coordination point for L-serine.

It belongs to the class-II aminoacyl-tRNA synthetase family. Type-1 seryl-tRNA synthetase subfamily. As to quaternary structure, homodimer. The tRNA molecule binds across the dimer.

The protein localises to the cytoplasm. It catalyses the reaction tRNA(Ser) + L-serine + ATP = L-seryl-tRNA(Ser) + AMP + diphosphate + H(+). It carries out the reaction tRNA(Sec) + L-serine + ATP = L-seryl-tRNA(Sec) + AMP + diphosphate + H(+). It participates in aminoacyl-tRNA biosynthesis; selenocysteinyl-tRNA(Sec) biosynthesis; L-seryl-tRNA(Sec) from L-serine and tRNA(Sec): step 1/1. Catalyzes the attachment of serine to tRNA(Ser). Is also able to aminoacylate tRNA(Sec) with serine, to form the misacylated tRNA L-seryl-tRNA(Sec), which will be further converted into selenocysteinyl-tRNA(Sec). This is Serine--tRNA ligase from Methylobacillus flagellatus (strain ATCC 51484 / DSM 6875 / VKM B-1610 / KT).